Here is a 141-residue protein sequence, read N- to C-terminus: Large ribosomal subunit protein bL17 (141 aa).

The protein belongs to the bacterial ribosomal protein bL17 family. As to quaternary structure, part of the 50S ribosomal subunit. Contacts protein L32.

This is Large ribosomal subunit protein bL17 from Maridesulfovibrio salexigens (strain ATCC 14822 / DSM 2638 / NCIMB 8403 / VKM B-1763) (Desulfovibrio salexigens).